Consider the following 443-residue polypeptide: GPI mannosyltransferase 1 (443 aa).

11 helical membrane-spanning segments follow: residues proline 8–tryptophan 28, proline 68–glycine 88, alanine 90–threonine 110, threonine 136–leucine 156, isoleucine 160–tyrosine 180, leucine 232–glycine 252, phenylalanine 273–valine 291, phenylalanine 302–leucine 322, serine 347–leucine 367, isoleucine 374–leucine 394, and leucine 406–alanine 426.

The protein belongs to the PIGM family.

The protein localises to the endoplasmic reticulum membrane. It functions in the pathway glycolipid biosynthesis; glycosylphosphatidylinositol-anchor biosynthesis. In terms of biological role, mannosyltransferase involved in glycosylphosphatidylinositol-anchor biosynthesis. Transfers the first alpha-1,4-mannose to GlcN-acyl-PI during GPI precursor assembly. Required for cell wall integrity. The chain is GPI mannosyltransferase 1 (gpi14) from Emericella nidulans (strain FGSC A4 / ATCC 38163 / CBS 112.46 / NRRL 194 / M139) (Aspergillus nidulans).